Here is a 185-residue protein sequence, read N- to C-terminus: Ribosome-recycling factor (185 aa).

Belongs to the RRF family.

Its subcellular location is the cytoplasm. Responsible for the release of ribosomes from messenger RNA at the termination of protein biosynthesis. May increase the efficiency of translation by recycling ribosomes from one round of translation to another. The protein is Ribosome-recycling factor of Campylobacter lari (strain RM2100 / D67 / ATCC BAA-1060).